The sequence spans 505 residues: Histidine ammonia-lyase (505 aa).

The 5-imidazolinone (Ala-Gly) cross-link spans 141–143; the sequence is ASG. Ser142 carries the 2,3-didehydroalanine (Ser) modification.

It belongs to the PAL/histidase family. Contains an active site 4-methylidene-imidazol-5-one (MIO), which is formed autocatalytically by cyclization and dehydration of residues Ala-Ser-Gly.

It localises to the cytoplasm. The catalysed reaction is L-histidine = trans-urocanate + NH4(+). The protein operates within amino-acid degradation; L-histidine degradation into L-glutamate; N-formimidoyl-L-glutamate from L-histidine: step 1/3. The protein is Histidine ammonia-lyase of Bacillus cereus (strain ZK / E33L).